Consider the following 1071-residue polypeptide: Carbamoyl phosphate synthase large chain (1071 aa).

The tract at residues 1–403 (MPKRTDLKSI…SFQKALRGLE (403 aa)) is carboxyphosphate synthetic domain. 12 residues coordinate ATP: arginine 129, arginine 169, glycine 175, glycine 176, glutamine 208, valine 210, glutamate 215, glycine 241, valine 242, histidine 243, glutamine 285, and glutamate 299. The region spanning 133 to 328 (KEAMEKIGLS…IAKVAAKLAV (196 aa)) is the ATP-grasp 1 domain. Residues glutamine 285, glutamate 299, and asparagine 301 each contribute to the Mg(2+) site. Mn(2+) is bound by residues glutamine 285, glutamate 299, and asparagine 301. The interval 404 to 548 (TGLCGFNPRS…YSTYEEECEA (145 aa)) is oligomerization domain. Residues 549-930 (RPSDRKKVMI…AYYKAQLGAG (382 aa)) form a carbamoyl phosphate synthetic domain region. Residues 673 to 864 (QKVLNDLGLR…LAKVGARCMA (192 aa)) enclose the ATP-grasp 2 domain. ATP contacts are provided by arginine 709, phenylalanine 748, leucine 750, glutamate 755, glycine 780, isoleucine 781, histidine 782, serine 783, glutamine 823, and glutamate 835. Positions 823, 835, and 837 each coordinate Mg(2+). Positions 823, 835, and 837 each coordinate Mn(2+). In terms of domain architecture, MGS-like spans 931-1071 (ERLNPTGKIF…ELHGRLKNRS (141 aa)). Positions 931-1071 (ERLNPTGKIF…ELHGRLKNRS (141 aa)) are allosteric domain.

It belongs to the CarB family. In terms of assembly, composed of two chains; the small (or glutamine) chain promotes the hydrolysis of glutamine to ammonia, which is used by the large (or ammonia) chain to synthesize carbamoyl phosphate. Tetramer of heterodimers (alpha,beta)4. It depends on Mg(2+) as a cofactor. Mn(2+) is required as a cofactor.

The enzyme catalyses hydrogencarbonate + L-glutamine + 2 ATP + H2O = carbamoyl phosphate + L-glutamate + 2 ADP + phosphate + 2 H(+). The catalysed reaction is hydrogencarbonate + NH4(+) + 2 ATP = carbamoyl phosphate + 2 ADP + phosphate + 2 H(+). The protein operates within amino-acid biosynthesis; L-arginine biosynthesis; carbamoyl phosphate from bicarbonate: step 1/1. It functions in the pathway pyrimidine metabolism; UMP biosynthesis via de novo pathway; (S)-dihydroorotate from bicarbonate: step 1/3. Its function is as follows. Large subunit of the glutamine-dependent carbamoyl phosphate synthetase (CPSase). CPSase catalyzes the formation of carbamoyl phosphate from the ammonia moiety of glutamine, carbonate, and phosphate donated by ATP, constituting the first step of 2 biosynthetic pathways, one leading to arginine and/or urea and the other to pyrimidine nucleotides. The large subunit (synthetase) binds the substrates ammonia (free or transferred from glutamine from the small subunit), hydrogencarbonate and ATP and carries out an ATP-coupled ligase reaction, activating hydrogencarbonate by forming carboxy phosphate which reacts with ammonia to form carbamoyl phosphate. The chain is Carbamoyl phosphate synthase large chain from Neisseria meningitidis serogroup A / serotype 4A (strain DSM 15465 / Z2491).